The primary structure comprises 148 residues: Large ribosomal subunit protein bL9 (148 aa).

Residues 46-65 (QLQQQNKHAEQEREQEIEDA) form a disordered region. Positions 52 to 65 (KHAEQEREQEIEDA) are enriched in basic and acidic residues.

This sequence belongs to the bacterial ribosomal protein bL9 family.

In terms of biological role, binds to the 23S rRNA. This chain is Large ribosomal subunit protein bL9, found in Staphylococcus carnosus (strain TM300).